The chain runs to 448 residues: Adenosylhomocysteinase (448 aa).

Substrate is bound by residues Thr-61, Asp-136, and Glu-161. Residue 162–164 (TTA) coordinates NAD(+). Substrate-binding residues include Lys-191 and Asp-195. NAD(+)-binding positions include Asn-196, 225 to 230 (GYGDVG), Glu-248, Asn-283, 304 to 306 (IGH), and Asn-360.

The protein belongs to the adenosylhomocysteinase family. NAD(+) serves as cofactor.

The protein localises to the cytoplasm. It carries out the reaction S-adenosyl-L-homocysteine + H2O = L-homocysteine + adenosine. It participates in amino-acid biosynthesis; L-homocysteine biosynthesis; L-homocysteine from S-adenosyl-L-homocysteine: step 1/1. May play a key role in the regulation of the intracellular concentration of adenosylhomocysteine. The sequence is that of Adenosylhomocysteinase from Rhodopirellula baltica (strain DSM 10527 / NCIMB 13988 / SH1).